A 161-amino-acid chain; its full sequence is Small ribosomal subunit protein uS9 (161 aa).

2 disordered regions span residues 1–27 (MAQI…APKA) and 142–161 (KERK…FSKR).

This sequence belongs to the universal ribosomal protein uS9 family.

The chain is Small ribosomal subunit protein uS9 from Clavibacter michiganensis subsp. michiganensis (strain NCPPB 382).